The chain runs to 542 residues: Tubby-related protein 1 (542 aa).

Residues 1–289 (MPLRDETLRE…RAPSPPVEVD (289 aa)) form a disordered region. Basic and acidic residues predominate over residues 91–104 (FLRDPEAKKRDPRE). The segment covering 114–132 (AEDEEEEEEEDEEDEEEEA) has biased composition (acidic residues). Residues 146–157 (PLREKSSADLKE) are compositionally biased toward basic and acidic residues. The segment covering 262-275 (SNQKGKAKGKGKKK) has biased composition (basic residues).

Belongs to the TUB family. As to quaternary structure, homodimer. May interact with ABCF1, PSIP1, ZEB1 and HMGB2 (Potential). Interacts with DNM1. Interacts with F-actin. Interacts with TUB. Interacts with TYRO3. In terms of tissue distribution, retina-specific.

The protein localises to the cytoplasm. It localises to the cell membrane. The protein resides in the secreted. It is found in the synapse. In terms of biological role, required for normal development of photoreceptor synapses. Required for normal photoreceptor function and for long-term survival of photoreceptor cells. Interacts with cytoskeleton proteins and may play a role in protein transport in photoreceptor cells. Binds lipids, especially phosphatidylinositol 3-phosphate, phosphatidylinositol 4-phosphate, phosphatidylinositol 5-phosphate, phosphatidylinositol 3,4-bisphosphate, phosphatidylinositol 4,5-bisphosphate, phosphatidylinositol 3,4,5-bisphosphate, phosphatidylserine and phosphatidic acid (in vitro). Contribute to stimulation of phagocytosis of apoptotic retinal pigment epithelium (RPE) cells and macrophages. The sequence is that of Tubby-related protein 1 (TULP1) from Homo sapiens (Human).